Consider the following 201-residue polypeptide: Adenylyl-sulfate kinase (201 aa).

Position 35–42 (35–42 (GLSGSGKS)) interacts with ATP. Residue serine 109 is the Phosphoserine intermediate of the active site.

Belongs to the APS kinase family.

The enzyme catalyses adenosine 5'-phosphosulfate + ATP = 3'-phosphoadenylyl sulfate + ADP + H(+). The protein operates within sulfur metabolism; hydrogen sulfide biosynthesis; sulfite from sulfate: step 2/3. Its function is as follows. Catalyzes the synthesis of activated sulfate. The protein is Adenylyl-sulfate kinase of Salmonella typhi.